Here is a 131-residue protein sequence, read N- to C-terminus: uncharacterized protein (131 aa).

Residues 16–71 (MSEQERDEVLEDDDDDEDNKSSQQERDEFVEDDDNNSIQSSPSCAQPLLTQYHDDG) are disordered. The span at 20 to 33 (ERDEVLEDDDDDED) shows a compositional bias: acidic residues.

This is an uncharacterized protein from Dictyostelium discoideum (Social amoeba).